Reading from the N-terminus, the 268-residue chain is tRNA pseudouridine synthase A (268 aa).

Catalysis depends on Asp52, which acts as the Nucleophile. A substrate-binding site is contributed by Tyr113.

Belongs to the tRNA pseudouridine synthase TruA family. Homodimer.

The enzyme catalyses uridine(38/39/40) in tRNA = pseudouridine(38/39/40) in tRNA. Functionally, formation of pseudouridine at positions 38, 39 and 40 in the anticodon stem and loop of transfer RNAs. This chain is tRNA pseudouridine synthase A, found in Chlamydia abortus (strain DSM 27085 / S26/3) (Chlamydophila abortus).